We begin with the raw amino-acid sequence, 137 residues long: DNA-binding protein H-NS (137 aa).

A coiled-coil region spans residues 13 to 65 (TLRAQARECTLETLEEMLEKLEVVVNERREEESAAAAEVEERTRKLQQYREML). A DNA-binding region spans residues 112–117 (QGRTPA).

The protein belongs to the histone-like protein H-NS family. In terms of assembly, homodimer that oligomerizes on DNA into higher-order complexes that form bridges between disparate regions of DNA compacting it. Interacts with Hha, YdgT and StpA.

It is found in the cytoplasm. The protein resides in the nucleoid. Functionally, a DNA-binding protein implicated in transcriptional repression and chromosome organization and compaction. Binds AT-rich DNA, repressing its transcription; about 754/4438 tested genes (15%) bind to H-NS, 70% of these are AT-rich and correspond to horizontally transferred geness (HTG), thus playing a central role in silencing foreign genes. This offers the selective advantage of silencing foreign DNA. Binds nucleation sites in AT-rich DNA and bridges them, forming higher-order nucleoprotein complexes and condensing the chromosome. A subset of genes are repressed by H-NS in association with Hha and/or YdgT. In Salmonella typhimurium (strain 14028s / SGSC 2262), this protein is DNA-binding protein H-NS (hns).